The primary structure comprises 125 residues: Calcitonin receptor-stimulating peptide 3 (125 aa).

The first 25 residues, 1-25 (MGFWKFPPFLILSILVLYQAGMLHA), serve as a signal peptide directing secretion. The propeptide occupies 26-79 (APFRMALGSSFDSATLTEEEMSLLLVAMVKDYVQMKATVLEQETEDFSITTQER). C81 and C86 form a disulfide bridge. L116 carries the leucine amide modification. Positions 122 to 125 (QPQA) are excised as a propeptide.

It belongs to the calcitonin family. In terms of tissue distribution, mainly expressed in the thyroid gland and CNS. Found in the nerve cells of cerebrum, hippocampus, hypothalamus, pons/midbrain and thalamus.

Its subcellular location is the secreted. The protein is Calcitonin receptor-stimulating peptide 3 (CRSP3) of Sus scrofa (Pig).